A 672-amino-acid chain; its full sequence is Bifunctional polymyxin resistance protein ArnA (672 aa).

The formyltransferase ArnAFT stretch occupies residues Met1–Leu310. His104 serves as the catalytic Proton donor; for formyltransferase activity. Residues Arg114 and Val136–Asp140 each bind (6R)-10-formyltetrahydrofolate. The tract at residues Arg320–Gly672 is dehydrogenase ArnADH. NAD(+)-binding positions include Asp353 and Asp374 to Ile375. Residues Ala399, Tyr404, and Thr438–Ser439 contribute to the UDP-alpha-D-glucuronate site. Residue Glu440 is the Proton acceptor; for decarboxylase activity of the active site. Residues Arg466, Asn498, Lys532–Arg541, and Tyr619 each bind UDP-alpha-D-glucuronate. Arg625 acts as the Proton donor; for decarboxylase activity in catalysis.

This sequence in the N-terminal section; belongs to the Fmt family. UDP-L-Ara4N formyltransferase subfamily. In the C-terminal section; belongs to the NAD(P)-dependent epimerase/dehydratase family. UDP-glucuronic acid decarboxylase subfamily. Homohexamer, formed by a dimer of trimers.

It catalyses the reaction UDP-alpha-D-glucuronate + NAD(+) = UDP-beta-L-threo-pentopyranos-4-ulose + CO2 + NADH. The enzyme catalyses UDP-4-amino-4-deoxy-beta-L-arabinose + (6R)-10-formyltetrahydrofolate = UDP-4-deoxy-4-formamido-beta-L-arabinose + (6S)-5,6,7,8-tetrahydrofolate + H(+). It participates in nucleotide-sugar biosynthesis; UDP-4-deoxy-4-formamido-beta-L-arabinose biosynthesis; UDP-4-deoxy-4-formamido-beta-L-arabinose from UDP-alpha-D-glucuronate: step 1/3. It functions in the pathway nucleotide-sugar biosynthesis; UDP-4-deoxy-4-formamido-beta-L-arabinose biosynthesis; UDP-4-deoxy-4-formamido-beta-L-arabinose from UDP-alpha-D-glucuronate: step 3/3. The protein operates within bacterial outer membrane biogenesis; lipopolysaccharide biosynthesis. In terms of biological role, bifunctional enzyme that catalyzes the oxidative decarboxylation of UDP-glucuronic acid (UDP-GlcUA) to UDP-4-keto-arabinose (UDP-Ara4O) and the addition of a formyl group to UDP-4-amino-4-deoxy-L-arabinose (UDP-L-Ara4N) to form UDP-L-4-formamido-arabinose (UDP-L-Ara4FN). The modified arabinose is attached to lipid A and is required for resistance to polymyxin and cationic antimicrobial peptides. This chain is Bifunctional polymyxin resistance protein ArnA, found in Pectobacterium carotovorum subsp. carotovorum (strain PC1).